A 152-amino-acid chain; its full sequence is SsrA-binding protein (152 aa).

This sequence belongs to the SmpB family.

It localises to the cytoplasm. Required for rescue of stalled ribosomes mediated by trans-translation. Binds to transfer-messenger RNA (tmRNA), required for stable association of tmRNA with ribosomes. tmRNA and SmpB together mimic tRNA shape, replacing the anticodon stem-loop with SmpB. tmRNA is encoded by the ssrA gene; the 2 termini fold to resemble tRNA(Ala) and it encodes a 'tag peptide', a short internal open reading frame. During trans-translation Ala-aminoacylated tmRNA acts like a tRNA, entering the A-site of stalled ribosomes, displacing the stalled mRNA. The ribosome then switches to translate the ORF on the tmRNA; the nascent peptide is terminated with the 'tag peptide' encoded by the tmRNA and targeted for degradation. The ribosome is freed to recommence translation, which seems to be the essential function of trans-translation. In Rickettsia massiliae (strain Mtu5), this protein is SsrA-binding protein.